Reading from the N-terminus, the 297-residue chain is tRNA-cytidine(32) 2-sulfurtransferase (297 aa).

The short motif at 61 to 66 (SGGKDS) is the PP-loop motif element. [4Fe-4S] cluster contacts are provided by C136, C139, and C227.

The protein belongs to the TtcA family. In terms of assembly, homodimer. Mg(2+) serves as cofactor. The cofactor is [4Fe-4S] cluster.

Its subcellular location is the cytoplasm. It catalyses the reaction cytidine(32) in tRNA + S-sulfanyl-L-cysteinyl-[cysteine desulfurase] + AH2 + ATP = 2-thiocytidine(32) in tRNA + L-cysteinyl-[cysteine desulfurase] + A + AMP + diphosphate + H(+). Its pathway is tRNA modification. Functionally, catalyzes the ATP-dependent 2-thiolation of cytidine in position 32 of tRNA, to form 2-thiocytidine (s(2)C32). The sulfur atoms are provided by the cysteine/cysteine desulfurase (IscS) system. This Paracoccus denitrificans (strain Pd 1222) protein is tRNA-cytidine(32) 2-sulfurtransferase.